Reading from the N-terminus, the 248-residue chain is PF03932 family protein CutC (248 aa).

Belongs to the CutC family.

The protein localises to the cytoplasm. This Porphyromonas gingivalis (strain ATCC BAA-308 / W83) protein is PF03932 family protein CutC.